The chain runs to 354 residues: Rhodopsin (354 aa).

Over 1–36 the chain is Extracellular; that stretch reads MNGTEGPDFYVPMVNTTGIVRSPYDYPQYYLVNPAA. N-linked (GlcNAc...) asparagine glycosylation is found at Asn-2 and Asn-15. Residues 37-61 form a helical membrane-spanning segment; the sequence is FSMLAAYMFFLILVGFPVNFLTLYV. Residues 62 to 73 lie on the Cytoplasmic side of the membrane; it reads TMEHKKLRTPLN. Residues 74–96 form a helical membrane-spanning segment; sequence YILLNLAVANLFMVIGGFTTTMY. The Extracellular portion of the chain corresponds to 97–110; sequence TSMHGYFVLGRTGC. An intrachain disulfide couples Cys-110 to Cys-187. The helical transmembrane segment at 111–133 threads the bilayer; it reads NLEGFFATLGGEIALWSLVVLAV. Residues 134–136 carry the 'Ionic lock' involved in activated form stabilization motif; sequence ERW. The Cytoplasmic portion of the chain corresponds to 134-152; it reads ERWVVVCKPISNFRFGENH. A helical transmembrane segment spans residues 153–173; the sequence is AVMGVSFTWLMACACSVPPLF. Residues 174–202 are Extracellular-facing; the sequence is GWSRYIPEGMQCSCGIDYYTRAPGYNNES. The helical transmembrane segment at 203–224 threads the bilayer; the sequence is FVIYMFVCHFSIPLTIIFFCYG. Over 225–252 the chain is Cytoplasmic; that stretch reads RLLCAVKDAAAAQQESETTQRAEREVSR. A helical membrane pass occupies residues 253–274; it reads MVVIMVIGFLICWLPYASVAWF. Residues 275–286 are Extracellular-facing; it reads IFTHQGSEFGPV. A helical membrane pass occupies residues 287–308; that stretch reads FMTIPAFFAKSSAIYNPMIYIC. An N6-(retinylidene)lysine modification is found at Lys-296. Residues 309-354 lie on the Cytoplasmic side of the membrane; the sequence is MNKQFRHCMITTLCCGKNPFEEEEGASTTASKTEASSVSSSHVSPA. S-palmitoyl cysteine attachment occurs at residues Cys-322 and Cys-323. A disordered region spans residues 333 to 354; sequence GASTTASKTEASSVSSSHVSPA. Positions 334 to 354 are enriched in low complexity; that stretch reads ASTTASKTEASSVSSSHVSPA.

The protein belongs to the G-protein coupled receptor 1 family. Opsin subfamily. Phosphorylated on some or all of the serine and threonine residues present in the C-terminal region. Post-translationally, contains one covalently linked retinal chromophore.

The protein resides in the membrane. Its subcellular location is the cell projection. It is found in the cilium. The protein localises to the photoreceptor outer segment. Photoreceptor required for image-forming vision at low light intensity. While most salt water fish species use retinal as chromophore, most freshwater fish use 3-dehydroretinal, or a mixture of retinal and 3-dehydroretinal. Light-induced isomerization of 11-cis to all-trans retinal triggers a conformational change that activates signaling via G-proteins. Subsequent receptor phosphorylation mediates displacement of the bound G-protein alpha subunit by arrestin and terminates signaling. The polypeptide is Rhodopsin (rho) (Zeus faber (John Dory)).